Here is a 321-residue protein sequence, read N- to C-terminus: Ribose-phosphate pyrophosphokinase (321 aa).

ATP is bound by residues 39 to 41 (DGE) and 98 to 99 (RQ). Mg(2+) contacts are provided by His-132 and Asp-170. Lys-195 is a catalytic residue. D-ribose 5-phosphate is bound by residues Arg-197, Asp-221, and 225 to 229 (DTGGT).

Belongs to the ribose-phosphate pyrophosphokinase family. Class I subfamily. In terms of assembly, homohexamer. It depends on Mg(2+) as a cofactor.

The protein localises to the cytoplasm. The enzyme catalyses D-ribose 5-phosphate + ATP = 5-phospho-alpha-D-ribose 1-diphosphate + AMP + H(+). The protein operates within metabolic intermediate biosynthesis; 5-phospho-alpha-D-ribose 1-diphosphate biosynthesis; 5-phospho-alpha-D-ribose 1-diphosphate from D-ribose 5-phosphate (route I): step 1/1. In terms of biological role, involved in the biosynthesis of the central metabolite phospho-alpha-D-ribosyl-1-pyrophosphate (PRPP) via the transfer of pyrophosphoryl group from ATP to 1-hydroxyl of ribose-5-phosphate (Rib-5-P). This chain is Ribose-phosphate pyrophosphokinase, found in Mycoplasmopsis pulmonis (strain UAB CTIP) (Mycoplasma pulmonis).